A 418-amino-acid chain; its full sequence is Gamma-glutamyl phosphate reductase (418 aa).

It belongs to the gamma-glutamyl phosphate reductase family.

It localises to the cytoplasm. It carries out the reaction L-glutamate 5-semialdehyde + phosphate + NADP(+) = L-glutamyl 5-phosphate + NADPH + H(+). The protein operates within amino-acid biosynthesis; L-proline biosynthesis; L-glutamate 5-semialdehyde from L-glutamate: step 2/2. Catalyzes the NADPH-dependent reduction of L-glutamate 5-phosphate into L-glutamate 5-semialdehyde and phosphate. The product spontaneously undergoes cyclization to form 1-pyrroline-5-carboxylate. This Lacticaseibacillus paracasei (strain ATCC 334 / BCRC 17002 / CCUG 31169 / CIP 107868 / KCTC 3260 / NRRL B-441) (Lactobacillus paracasei) protein is Gamma-glutamyl phosphate reductase.